A 194-amino-acid polypeptide reads, in one-letter code: Large ribosomal subunit protein eL15 (194 aa).

The segment at 165–194 is disordered; that stretch reads AGKKGRGLRNKGKGAEKVRPSIRANEGKGK. The span at 167 to 176 shows a compositional bias: basic residues; the sequence is KKGRGLRNKG. Basic and acidic residues predominate over residues 177-194; it reads KGAEKVRPSIRANEGKGK.

The protein belongs to the eukaryotic ribosomal protein eL15 family. As to quaternary structure, part of the 50S ribosomal subunit.

This chain is Large ribosomal subunit protein eL15, found in Pyrococcus furiosus (strain ATCC 43587 / DSM 3638 / JCM 8422 / Vc1).